Consider the following 355-residue polypeptide: Serpentine receptor class epsilon-1 (355 aa).

Transmembrane regions (helical) follow at residues 28–48 (FELL…YATI), 56–76 (LNFI…GRFI), 102–122 (ILSS…SLAV), 144–164 (ISLF…IVML), 172–192 (VMAF…LVLF), 232–252 (VVLF…MYMS), and 268–288 (FAFN…IIFS).

It belongs to the nematode receptor-like protein sre family.

The protein resides in the membrane. In Caenorhabditis elegans, this protein is Serpentine receptor class epsilon-1 (sre-1).